We begin with the raw amino-acid sequence, 511 residues long: Tryptophan 5-halogenase PyrH (511 aa).

FAD is bound by residues Gly-10, Ala-13, Ser-36, Val-39, Ile-42, Val-44, and Ala-47. Ser-50 is an L-tryptophan binding site. Lys-75 is a catalytic residue. Residues Pro-93, Gln-160, and Gln-163 each coordinate L-tryptophan. Positions 195 and 345 each coordinate FAD. Positions 356 and 357 each coordinate chloride. Position 358 (Ile-358) interacts with FAD. 2 residues coordinate L-tryptophan: Gly-450 and Tyr-454.

Belongs to the flavin-dependent halogenase family. Bacterial tryptophan halogenase subfamily. Homodimer.

The catalysed reaction is L-tryptophan + FADH2 + chloride + O2 = 5-chloro-L-tryptophan + FAD + 2 H2O. Its pathway is antibiotic biosynthesis. Functionally, involved in the biosynthesis of the antibiotic compound pyrroindomycin B. Catalyzes the chlorination of tryptophan (Trp) at C5 position to yield 5-chloro-L-tryptophan. It is also able to use bromide ions to generate monobrominated Trp, but the brominating activity is only about 75% of the chlorinating activity. This chain is Tryptophan 5-halogenase PyrH, found in Streptomyces rugosporus.